A 549-amino-acid polypeptide reads, in one-letter code: Protein EPD1 (549 aa).

An N-terminal signal peptide occupies residues 1–22 (MLLNSLFPSILAAATFVTSAAA). N-linked (GlcNAc...) asparagine glycosylation is found at Asn40 and Asn59. Cys72 and Cys101 are joined by a disulfide. Asn147 and Asn163 each carry an N-linked (GlcNAc...) asparagine glycan. Intrachain disulfides connect Cys214/Cys347, Cys232/Cys263, Cys369/Cys420, Cys378/Cys444, and Cys397/Cys402. Residues 336–356 (AESASGVSRTSCPTNTDNWEA) are compositionally biased toward polar residues. The interval 336-361 (AESASGVSRTSCPTNTDNWEASTELP) is disordered. Asn383 carries an N-linked (GlcNAc...) asparagine glycan. N-linked (GlcNAc...) asparagine glycosylation is found at Asn408 and Asn438. The disordered stretch occupies residues 479 to 519 (SVRTDTSEATTDSGSGSSNSGSASSSKSTSSSTSSGSSGSK). The span at 487-519 (ATTDSGSGSSNSGSASSSKSTSSSTSSGSSGSK) shows a compositional bias: low complexity.

It belongs to the glycosyl hydrolase 72 family.

The protein localises to the cell membrane. This Candida maltosa (Yeast) protein is Protein EPD1 (EPD1).